The chain runs to 427 residues: MKTFLFTFCLVAIFGSSSWIGTNSVWMELSLLTAKLPEGWNLPSYLSAIVQIACLGPLIYSIIHKGIKMTIPTVPLIFIFMVLACICQLGLCFFWDDTGYIFGAIRSWPLYLLLFGLAIVDAISSVLFLPFMAQFHPSFLNAYFVGMGLSALIPSLLSLIQGTSNYWCDDNKTPHYYPPRFSVSMFFLINFFFTCAAVAAFLVLYKIGAHKNSSQVEPEPKHSIQIIQGDSTTDVNEVNTESSFQETSSIPDSSSATGARLAFLLLTTALVNAQMNGIVTSVQSYATLVYSQNTYHYAVTLSNVISPLASYLQFFVKIRSLPILAFLTLCSSLTTAVIIYLAALSPNWIFNSETAGTIISIASSLIAAGLHSYLRVMFAALLREGNQKESRLFWCGAFIQIGSFTGSAIMFPLVNVWKLFHSAPSCR.

Residues 1–2 (MK) are Cytoplasmic-facing. Residues 3–23 (TFLFTFCLVAIFGSSSWIGTN) traverse the membrane as a helical segment. Topologically, residues 24 to 42 (SVWMELSLLTAKLPEGWNL) are extracellular. Residues 43–63 (PSYLSAIVQIACLGPLIYSII) form a helical membrane-spanning segment. The Cytoplasmic portion of the chain corresponds to 64 to 73 (HKGIKMTIPT). Residues 74 to 94 (VPLIFIFMVLACICQLGLCFF) form a helical membrane-spanning segment. Residues 95–111 (WDDTGYIFGAIRSWPLY) lie on the Extracellular side of the membrane. A helical membrane pass occupies residues 112 to 132 (LLLFGLAIVDAISSVLFLPFM). Residues 133–139 (AQFHPSF) lie on the Cytoplasmic side of the membrane. The chain crosses the membrane as a helical span at residues 140 to 160 (LNAYFVGMGLSALIPSLLSLI). At 161-184 (QGTSNYWCDDNKTPHYYPPRFSVS) the chain is on the extracellular side. Residues 185–205 (MFFLINFFFTCAAVAAFLVLY) form a helical membrane-spanning segment. At 206-261 (KIGAHKNSSQVEPEPKHSIQIIQGDSTTDVNEVNTESSFQETSSIPDSSSATGARL) the chain is on the cytoplasmic side. Residues 262-282 (AFLLLTTALVNAQMNGIVTSV) traverse the membrane as a helical segment. The Extracellular portion of the chain corresponds to 283 to 297 (QSYATLVYSQNTYHY). A helical transmembrane segment spans residues 298–318 (AVTLSNVISPLASYLQFFVKI). Over 319–322 (RSLP) the chain is Cytoplasmic. Residues 323–343 (ILAFLTLCSSLTTAVIIYLAA) form a helical membrane-spanning segment. The Extracellular portion of the chain corresponds to 344 to 353 (LSPNWIFNSE). A helical transmembrane segment spans residues 354-374 (TAGTIISIASSLIAAGLHSYL). Over 375-391 (RVMFAALLREGNQKESR) the chain is Cytoplasmic. The helical transmembrane segment at 392 to 412 (LFWCGAFIQIGSFTGSAIMFP) threads the bilayer. The Extracellular segment spans residues 413–427 (LVNVWKLFHSAPSCR).

This sequence belongs to the riboflavin transporter family. Expressed in intestine.

It is found in the cell membrane. It carries out the reaction riboflavin(in) = riboflavin(out). Activity is strongly inhibited by riboflavin analogs, such as lumiflavin and lumichrome. Its function is as follows. Riboflavin transporter. Riboflavin transport is Na(+)-independent but pH-sensitive. This chain is Riboflavin transporter rft-1, found in Caenorhabditis elegans.